We begin with the raw amino-acid sequence, 467 residues long: Glutamate--tRNA ligase (467 aa).

Residues 9 to 19 (PSPTGYLHIGG) carry the 'HIGH' region motif. Positions 237-241 (KLSKR) match the 'KMSKS' region motif. Position 240 (lysine 240) interacts with ATP.

Belongs to the class-I aminoacyl-tRNA synthetase family. Glutamate--tRNA ligase type 1 subfamily. In terms of assembly, monomer.

It localises to the cytoplasm. The enzyme catalyses tRNA(Glu) + L-glutamate + ATP = L-glutamyl-tRNA(Glu) + AMP + diphosphate. Catalyzes the attachment of glutamate to tRNA(Glu) in a two-step reaction: glutamate is first activated by ATP to form Glu-AMP and then transferred to the acceptor end of tRNA(Glu). The sequence is that of Glutamate--tRNA ligase from Xanthomonas campestris pv. campestris (strain 8004).